The chain runs to 1032 residues: uncharacterized protein (1032 aa).

Over 1–17 (MYEEIRMKFTDIFIRRP) the chain is Cytoplasmic. Residues 18 to 36 (VLAVSISLLMIILGLQAIS) traverse the membrane as a helical segment. Residues 37-337 (KLAVREYPKM…TIAINSSIHE (301 aa)) are Periplasmic-facing. The chain crosses the membrane as a helical span at residues 338–357 (VIKTIGEATLIVLVVILMFI). Residues 358–363 (GSFRAI) are Cytoplasmic-facing. A helical membrane pass occupies residues 364–383 (LIPILAIPISLIGVLMLLQS). At 384-389 (FNFSIN) the chain is on the periplasmic side. The chain crosses the membrane as a helical span at residues 390-411 (LMTLLALILAIGLVVDDAIVVL). Residues 412-438 (ENIDRHIKAGETPFRAAIIGTREIAVP) lie on the Cytoplasmic side of the membrane. The helical transmembrane segment at 439–457 (VISMTIALIAVYSPMALMG) threads the bilayer. The Periplasmic segment spans residues 458 to 470 (GITGTLFKEFALT). The helical transmembrane segment at 471–493 (LAGAVFISGVVALTLSPMMSSKL) threads the bilayer. At 494 to 529 (LKSNAKPTWMEERVEHTLGKVNRVYEYMLDLVMLNR) the chain is on the cytoplasmic side. The chain crosses the membrane as a helical span at residues 530 to 548 (KSMLAFAVVIFSTLPFLFN). Topologically, residues 549–852 (SLSSELTPNE…ARQLVQEGNA (304 aa)) are periplasmic. A helical transmembrane segment spans residues 853–872 (LAVTFALAVIIIFLVLAIQF). Over 873–878 (ESIRDP) the chain is Cytoplasmic. Residues 879–898 (MVIMISVPLAVSGALVSLNI) traverse the membrane as a helical segment. Residues 899–910 (LSFFSIAGTTLN) lie on the Periplasmic side of the membrane. A helical membrane pass occupies residues 911 to 932 (IYSQVGLITLVGLITKHGILMC). The Cytoplasmic segment spans residues 933–960 (EVAKEEQLNHGKTRIEAITHAAKVRLRP). A helical transmembrane segment spans residues 961-979 (ILMTTAAMVAGLIPLLYAT). The Periplasmic segment spans residues 980 to 992 (GAGAVSRFSIGIV). Residues 993–1015 (IVAGLSIGTIFTLFVLPVVYSYV) form a helical membrane-spanning segment. Residues 1016-1032 (ATEHKPLPVFDENKTTH) lie on the Cytoplasmic side of the membrane.

It belongs to the resistance-nodulation-cell division (RND) (TC 2.A.6) family.

The protein localises to the cell inner membrane. Functionally, could be a drug efflux pump. This is an uncharacterized protein from Haemophilus influenzae (strain ATCC 51907 / DSM 11121 / KW20 / Rd).